Consider the following 1482-residue polypeptide: MQRSPLEKANFLSKLFFSWTRPILRKGFRQRLELSDIYQIPLSNSADYLSENLEREWDRELASKKKPKLINALRRCFFWRFVFHGIILYLGEVTKAVQPLLLGRIIASYDPDNKVERSIAIYLGIGLCLLFIVRTLLLHPAIFGLHHMGMQMRIALFSLIYKKTLKLSSRVLDKISTGQLISLLSNNLNKFDEGLALAHFVWIVPLQVVLLMGLLWDLLQASAFCGLAFLIVLALFQAWLGQMMMKYRERRAGKINERLVITSEMIDNIQSVKAYCWEEAMEKMIENLRETELKLTRKTAYVRYFNSSAFFFSGFFVVFLAVLPYALIKGIILRKIFTTISFCIVLRMAVTRQFPWAVQTWYDSLGAINKIQDFLQKEEYKTLEYNLTTTDVVMENITAFWDEGFGELFVKAKQNNSDVKMSNGDNGLFFSNFSLLGTPVLKNISFKIEKGQLLAVAGSTGAGKTSLLMMIMGELEPSEGKIKHSGRISFCSQFSWIMPGTIKENIIFGVSYDEYRYRSVIKACQLEEDISKFAEKDNTVLGEGGITLSGGQRARISLARAIYKDADLYLLDSPFGYLDVLTEKEIFESCVCKLMANKTRILITSKMEHLKKADKILILHEGSCYFYGAFSELQNLRPDFSSKLMGYDSFDQFSAERRSSILTETLRRFSIEGDTAVSWNEGKKQSFKQTGDFGERRKNSILNPLNSIRKFSVVQKGQPQMNGIEENDDEPLERRLSLVPDSEQGEAILPRSNIINTGPTFQGRNRRQSVLNLMTRPSISQGQNMFKTGNAARKMSMAPQSKLSEIDIYSRRLSQDSGMDISDEINEEDLKEWFFDDVENIPAVTTWNTYLRYITIHKNLVFVLIWCLVIFLVEVAASLVGLWLLEDISFKDKTNGTNGANNTFPVIITDTSKYYLFYIYVGIADTFFALGIFRGLPLVHTLISVSKILHHKMLYSVLKAPMSTFNTLKPGGILNRFSKDIAILDDLLPLTIFDFIQLILIVVGALIVVSAIRPYIFLATVPVIIAFIMLRAYFLQTSQQLKQLESEARTPIFTHLVTSLKGLWTLRAFGRQPYFETLFHKALNLHTASWFLYLSTLRWFQMRIELVFVIFFIAVTFISILTTGDGEGRVGILLTLAMNIMSTLQWAVNSSIDVDSLMRSVSRVFKFIDMPTEEPLPAKPTKSLKKNQLSQVLIIENEHVNKENNWPSGGQMIVKDLTAKYTDGGNAVLENISFSISPGQRVGLLGRTGSGKSTLLAAFLRLLNTEGEMQIDGVSWDSIPLQKWRKAFGVIPQKVFIFSGTFRKNLDPYGQWSDHELWKVADEVGLKSVIEQFPGKLDFVLVDGGYVLSHGHKQLICLARSVLSKAKILLLDEPSAHLDPITYQIIRRVLKNAFANCTVILSEHRIEAMLECQRFLVIEDNKVRQYESIQKLVNEKSLYRQAISHSDRMKLFPHRNSSRHKSLAKITALKEETEEEVQETRL.

The Cytoplasmic portion of the chain corresponds to 1–77 (MQRSPLEKAN…KLINALRRCF (77 aa)). A helical membrane pass occupies residues 78 to 98 (FWRFVFHGIILYLGEVTKAVQ). Residues 81–365 (FVFHGIILYL…WAVQTWYDSL (285 aa)) enclose the ABC transmembrane type-1 1 domain. The Extracellular portion of the chain corresponds to 99 to 122 (PLLLGRIIASYDPDNKVERSIAIY). A helical membrane pass occupies residues 123 to 146 (LGIGLCLLFIVRTLLLHPAIFGLH). The Cytoplasmic segment spans residues 147-195 (HMGMQMRIALFSLIYKKTLKLSSRVLDKISTGQLISLLSNNLNKFDEGL). A helical transmembrane segment spans residues 196–216 (ALAHFVWIVPLQVVLLMGLLW). The Extracellular portion of the chain corresponds to 217 to 222 (DLLQAS). The chain crosses the membrane as a helical span at residues 223–243 (AFCGLAFLIVLALFQAWLGQM). The Cytoplasmic segment spans residues 244-298 (MMKYRERRAGKINERLVITSEMIDNIQSVKAYCWEEAMEKMIENLRETELKLTRK). A helical membrane pass occupies residues 299–319 (TAYVRYFNSSAFFFSGFFVVF). The Extracellular portion of the chain corresponds to 320–339 (LAVLPYALIKGIILRKIFTT). Residues 340 to 358 (ISFCIVLRMAVTRQFPWAV) traverse the membrane as a helical segment. The Cytoplasmic portion of the chain corresponds to 359 to 859 (QTWYDSLGAI…YLRYITIHKN (501 aa)). ATP-binding positions include Trp-401, Ser-434, 458 to 465 (GSTGAGKT), and Gln-493. Residues 423-646 (NGDNGLFFSN…RPDFSSKLMG (224 aa)) enclose the ABC transporter 1 domain. The S-palmitoyl cysteine moiety is linked to residue Cys-524. Residues Ser-549 and Ser-660 each carry the phosphoserine modification. A disordered R region region spans residues 654–832 (SAERRSSILT…DEINEEDLKE (179 aa)). Residue Ser-670 is modified to Phosphoserine; by PKA. Phosphoserine is present on Ser-686. A Glycyl lysine isopeptide (Lys-Gly) (interchain with G-Cter in ubiquitin) cross-link involves residue Lys-688. A phosphoserine mark is found at Ser-700, Ser-712, Ser-737, Ser-769, Ser-796, and Ser-814. A helical transmembrane segment spans residues 860 to 880 (LVFVLIWCLVIFLVEVAASLV). Residues 860 to 1156 (LVFVLIWCLV…AVNSSIDVDS (297 aa)) form the ABC transmembrane type-1 2 domain. Residues 881-919 (GLWLLEDISFKDKTNGTNGANNTFPVIITDTSKYYLFYI) are Extracellular-facing. Residues Asn-895 and Asn-901 are each glycosylated (N-linked (GlcNAc...) asparagine). The chain crosses the membrane as a discontinuously helical span at residues 920–940 (YVGIADTFFALGIFRGLPLVH). The Cytoplasmic segment spans residues 941 to 991 (TLISVSKILHHKMLYSVLKAPMSTFNTLKPGGILNRFSKDIAILDDLLPLT). The chain crosses the membrane as a helical span at residues 992–1012 (IFDFIQLILIVVGALIVVSAI). Residues 1013 to 1014 (RP) are Extracellular-facing. The chain crosses the membrane as a helical span at residues 1015–1035 (YIFLATVPVIIAFIMLRAYFL). Residues 1036 to 1096 (QTSQQLKQLE…TASWFLYLST (61 aa)) lie on the Cytoplasmic side of the membrane. A helical membrane pass occupies residues 1097-1117 (LRWFQMRIELVFVIFFIAVTF). Residues 1118–1131 (ISILTTGDGEGRVG) are Extracellular-facing. A helical transmembrane segment spans residues 1132–1152 (ILLTLAMNIMSTLQWAVNSSI). The Cytoplasmic portion of the chain corresponds to 1153–1482 (DVDSLMRSVS…TEEEVQETRL (330 aa)). The ABC transporter 2 domain maps to 1212 to 1445 (MIVKDLTAKY…KSLYRQAISH (234 aa)). Residues Tyr-1221 and 1246-1253 (GRTGSGKS) each bind ATP. Residues 1388–1482 (RVLKNAFANC…TEEEVQETRL (95 aa)) are interaction with GORASP2. Residue Cys-1397 is the site of S-palmitoyl cysteine attachment. 2 positions are modified to phosphoserine: Ser-1446 and Ser-1458. The PDZ-binding motif lies at 1480–1482 (TRL).

This sequence belongs to the ABC transporter superfamily. ABCC family. CFTR transporter (TC 3.A.1.202) subfamily. As to quaternary structure, monomer; does not require oligomerization for channel activity. May form oligomers in the membrane. Interacts with SLC26A3, SLC26A6 and NHERF1. Interacts with SHANK2. Interacts with MYO6. Interacts (via C-terminus) with GOPC (via PDZ domain); this promotes CFTR internalization and thereby decreases channel activity. Interacts with SLC4A7 through NHERF1. Found in a complex with MYO5B and RAB11A. Interacts with ANO1. Interacts with SLC26A8. Interacts with AHCYL1; the interaction increases CFTR activity. Interacts with CSE1L. The core-glycosylated form interacts with GORASP2 (via PDZ GRASP-type 1 domain) in respone to ER stress. Interacts with MARCHF2; the interaction leads to CFTR ubiqtuitination and degradation. Interacts with ADGRG2. Post-translationally, N-glycosylated. Phosphorylated; cAMP treatment promotes phosphorylation and activates the channel. Dephosphorylation decreases the ATPase activity (in vitro). Phosphorylation at PKA sites activates the channel. Phosphorylation at PKC sites enhances the response to phosphorylation by PKA. Phosphorylated by AMPK; this inhibits channel activity. In terms of processing, ubiquitinated, leading to its degradation in the lysosome. Deubiquitination by USP10 in early endosomes enhances its endocytic recycling to the cell membrane. Ubiquitinated by RNF185 during ER stress. Ubiquitinated by MARCHF2.

The protein resides in the apical cell membrane. The protein localises to the early endosome membrane. It localises to the cell membrane. Its subcellular location is the recycling endosome membrane. It is found in the endoplasmic reticulum membrane. The protein resides in the nucleus. The enzyme catalyses ATP + H2O + closed Cl(-) channel = ADP + phosphate + open Cl(-) channel.. The catalysed reaction is chloride(in) = chloride(out). It catalyses the reaction hydrogencarbonate(in) = hydrogencarbonate(out). It carries out the reaction ATP + H2O = ADP + phosphate + H(+). Functionally, epithelial ion channel that plays an important role in the regulation of epithelial ion and water transport and fluid homeostasis. Mediates the transport of chloride ions across the cell membrane. Possesses an intrinsic ATPase activity and utilizes ATP to gate its channel; the passive flow of anions through the channel is gated by cycles of ATP binding and hydrolysis by the ATP-binding domains. The ion channel is also permeable to HCO(3)(-); selectivity depends on the extracellular chloride concentration. Exerts its function also by modulating the activity of other ion channels and transporters. Contributes to the regulation of the pH and the ion content of the epithelial fluid layer. Modulates the activity of the epithelial sodium channel (ENaC) complex, in part by regulating the cell surface expression of the ENaC complex. May regulate bicarbonate secretion and salvage in epithelial cells by regulating the transporter SLC4A7. Can inhibit the chloride channel activity of ANO1. Plays a role in the chloride and bicarbonate homeostasis during sperm epididymal maturation and capacitation. This is Cystic fibrosis transmembrane conductance regulator from Didelphis virginiana (North American opossum).